A 251-amino-acid chain; its full sequence is Octanoyltransferase (251 aa).

In terms of domain architecture, BPL/LPL catalytic spans 56 to 241 (AETPDEIWIV…NLDGASAAAD (186 aa)). Residues 96–103 (RGGQITYH), 168–170 (ALG), and 181–183 (GLS) contribute to the substrate site. The active-site Acyl-thioester intermediate is the C199.

This sequence belongs to the LipB family.

Its subcellular location is the cytoplasm. It catalyses the reaction octanoyl-[ACP] + L-lysyl-[protein] = N(6)-octanoyl-L-lysyl-[protein] + holo-[ACP] + H(+). Its pathway is protein modification; protein lipoylation via endogenous pathway; protein N(6)-(lipoyl)lysine from octanoyl-[acyl-carrier-protein]: step 1/2. Catalyzes the transfer of endogenously produced octanoic acid from octanoyl-acyl-carrier-protein onto the lipoyl domains of lipoate-dependent enzymes. Lipoyl-ACP can also act as a substrate although octanoyl-ACP is likely to be the physiological substrate. The sequence is that of Octanoyltransferase from Burkholderia vietnamiensis (strain G4 / LMG 22486) (Burkholderia cepacia (strain R1808)).